Here is a 148-residue protein sequence, read N- to C-terminus: MSSELNLKLLGTKTPYIFEYNKDLLEAFPNPNPNLDPLITLECKEFTSLCPITSQPDFGVVYIRYIPKDKMVESKSLKLYLFSYRNHGSFHESCINTILLDLVGLLEPKYLEVYGDFVSRGGIAIKPFVNYAIKEYQDFKEKRLLGAK.

Catalysis depends on cysteine 50, which acts as the Thioimide intermediate. Aspartate 57 functions as the Proton donor in the catalytic mechanism. Substrate-binding positions include 72 to 74 and 91 to 92; these read VES and HE.

This sequence belongs to the GTP cyclohydrolase I family. QueF type 1 subfamily.

It localises to the cytoplasm. The enzyme catalyses 7-aminomethyl-7-carbaguanine + 2 NADP(+) = 7-cyano-7-deazaguanine + 2 NADPH + 3 H(+). The protein operates within tRNA modification; tRNA-queuosine biosynthesis. In terms of biological role, catalyzes the NADPH-dependent reduction of 7-cyano-7-deazaguanine (preQ0) to 7-aminomethyl-7-deazaguanine (preQ1). The polypeptide is NADPH-dependent 7-cyano-7-deazaguanine reductase (Helicobacter acinonychis (strain Sheeba)).